The chain runs to 248 residues: tRNA pseudouridine synthase A (248 aa).

D53 functions as the Nucleophile in the catalytic mechanism. Y111 contributes to the substrate binding site.

The protein belongs to the tRNA pseudouridine synthase TruA family. In terms of assembly, homodimer.

It carries out the reaction uridine(38/39/40) in tRNA = pseudouridine(38/39/40) in tRNA. In terms of biological role, formation of pseudouridine at positions 38, 39 and 40 in the anticodon stem and loop of transfer RNAs. The sequence is that of tRNA pseudouridine synthase A from Streptococcus thermophilus (strain CNRZ 1066).